The following is a 662-amino-acid chain: MNFPWDQLLVKGNWMITMAQIGAPFLVIGLIAVITYFKLWKYLYKEWFTSVDHKKIGIMYLICAVLMFVRGGIDALLIRAQLTVPDNKFLESNHYNEIFSTHGVIMIIFMAMPFIFGLWNIVVPLQIGARDVAFPVLNNVSFWLFFAGMILFNLSFIIGGSPAAGWTNYAPLAGEFSPGPGVNYYLIAIQISGLGTLATGINFFVTILRCKTPTMKFMQMPMFTVTTFITTLIVILAFPPLTVALALMTTDRIFDTAFFTVAHGGMPMLWANFFWVWGHPEVYIVILPAFGIYSEIIPTFARKRLFGHQSMVWATAGIAFLSFLVWVHHFFTMGNGALINSFFSISTMLIGIPTGVKLFNWLLTLYKGRITFESPMLFSLAFIPNFLLGGVTGVMLAMASADYQYHNTYFLVAHFHYTLVTGVVFACLAGLIFWYPKMMGYKLNETLNKWCFWFFMIGFNVCFLPQFILGLDGMPRRLYTYMPSDGWFLLNLISTIGALLMAIGFLFLVVSIVYSHFKSPREATGDNWDGLGRTLEWTTASAIPPKYNFAITPDWNDYDTFVDMKEHGRHYLDNHNYKDIHMPNNTPVGFWIGIFMTIGGFFLIFETVIPALICLFGIFGTMIYRSFQIDHGYHIPAAEVAETEARLREARIKEREAVSHES.

Transmembrane regions (helical) follow at residues 14–34 (WMIT…IAVI) and 58–78 (IMYL…ALLI). His102 lines the Fe(II)-heme a pocket. 8 helical membrane passes run 103-123 (GVIM…NIVV), 140-160 (VSFW…IIGG), 187-207 (IAIQ…FVTI), 228-248 (FITT…LALM), 273-293 (FFWV…FGIY), 311-331 (MVWA…HHFF), 336-356 (GALI…PTGV), and 376-396 (MLFS…GVML). Residues His279, Tyr283, His328, and His329 each contribute to the Cu cation site. A cross-link (1'-histidyl-3'-tyrosine (His-Tyr)) is located at residues 279 to 283 (HPEVY). His414 contacts heme a3. 5 helical membrane passes run 415 to 435 (FHYT…IFWY), 451 to 471 (CFWF…ILGL), 493 to 513 (ISTI…VSIV), 587 to 604 (PVGF…FFLI), and 608 to 627 (VIPA…YRSF). His416 provides a ligand contact to Fe(II)-heme a.

Belongs to the heme-copper respiratory oxidase family. Cu cation is required as a cofactor. The cofactor is ferriheme a. Heme A3. serves as cofactor.

Its subcellular location is the cell membrane. The catalysed reaction is 2 a quinol + O2 = 2 a quinone + 2 H2O. Its pathway is energy metabolism; oxidative phosphorylation. Functionally, catalyzes quinol oxidation with the concomitant reduction of oxygen to water. This is Probable quinol oxidase subunit 1 (qoxB) from Staphylococcus aureus (strain USA300).